The primary structure comprises 587 residues: Aspartate--tRNA ligase (587 aa).

Glu-174 is a binding site for L-aspartate. Residues 198-201 form an aspartate region; the sequence is QITK. L-aspartate is bound at residue Arg-220. ATP contacts are provided by residues 220–222 and Gln-229; that span reads RDE. His-443 lines the L-aspartate pocket. Glu-477 contacts ATP. L-aspartate is bound at residue Arg-484. ATP is bound at residue 529-532; that stretch reads GLDR.

It belongs to the class-II aminoacyl-tRNA synthetase family. Type 1 subfamily. As to quaternary structure, homodimer.

The protein localises to the cytoplasm. It carries out the reaction tRNA(Asp) + L-aspartate + ATP = L-aspartyl-tRNA(Asp) + AMP + diphosphate. Its function is as follows. Catalyzes the attachment of L-aspartate to tRNA(Asp) in a two-step reaction: L-aspartate is first activated by ATP to form Asp-AMP and then transferred to the acceptor end of tRNA(Asp). The protein is Aspartate--tRNA ligase of Streptococcus pneumoniae (strain Taiwan19F-14).